A 319-amino-acid polypeptide reads, in one-letter code: Cytochrome f (319 aa).

A signal peptide spans 1–34; the sequence is MQNRNTYEWAKKMTRLISVLVMIHIITRTSISNA. Heme contacts are provided by Y35, C55, C58, and H59. Residues 287–304 form a helical membrane-spanning segment; the sequence is GLLLFLASVILAQIFLVL.

Belongs to the cytochrome f family. In terms of assembly, the 4 large subunits of the cytochrome b6-f complex are cytochrome b6, subunit IV (17 kDa polypeptide, petD), cytochrome f and the Rieske protein, while the 4 small subunits are PetG, PetL, PetM and PetN. The complex functions as a dimer. Requires heme as cofactor.

Its subcellular location is the plastid. It is found in the chloroplast thylakoid membrane. In terms of biological role, component of the cytochrome b6-f complex, which mediates electron transfer between photosystem II (PSII) and photosystem I (PSI), cyclic electron flow around PSI, and state transitions. The polypeptide is Cytochrome f (petA) (Pinus thunbergii (Japanese black pine)).